The primary structure comprises 279 residues: Urease accessory protein UreD (279 aa).

This sequence belongs to the UreD family. As to quaternary structure, ureD, UreF and UreG form a complex that acts as a GTP-hydrolysis-dependent molecular chaperone, activating the urease apoprotein by helping to assemble the nickel containing metallocenter of UreC. The UreE protein probably delivers the nickel.

The protein localises to the cytoplasm. Functionally, required for maturation of urease via the functional incorporation of the urease nickel metallocenter. The polypeptide is Urease accessory protein UreD (Trichormus variabilis (strain ATCC 29413 / PCC 7937) (Anabaena variabilis)).